A 154-amino-acid polypeptide reads, in one-letter code: UPF0756 membrane protein YtwI (154 aa).

4 consecutive transmembrane segments (helical) span residues Phe-8–Val-28, Trp-54–Phe-74, Trp-87–Leu-107, and Leu-117–Ile-137.

This sequence belongs to the UPF0756 family.

Its subcellular location is the cell membrane. The chain is UPF0756 membrane protein YtwI (ytwI) from Bacillus subtilis (strain 168).